The following is a 358-amino-acid chain: Septin-12 (358 aa).

Positions 1–25 (MDPLRRSPSPCLSSQPSSPSTPPCE) are disordered. Residues 6–18 (RSPSPCLSSQPSS) show a composition bias toward low complexity. One can recognise a Septin-type G domain in the interval 46-317 (MGFEFNIMVV…ENYRVIRLNE (272 aa)). Residues 46–319 (MGFEFNIMVV…YRVIRLNESH (274 aa)) are interaction with SEPTIN7. A G1 motif region spans residues 56 to 63 (GQSGLGKS). Residues 56–63 (GQSGLGKS), T89, G115, 195–203 (RADSLTMEE), G251, and R266 each bind GTP. The G3 motif stretch occupies residues 112–115 (DTPG). A G4 motif region spans residues 194 to 197 (ARAD). Positions 258 to 358 (VNGRCVLGRK…GAHDDSDDEF (101 aa)) are self-association (via N-terminus) to polymerize octameric septin 12-7-6-2/4-2/4-6-7-12 filaments.

This sequence belongs to the TRAFAC class TrmE-Era-EngA-EngB-Septin-like GTPase superfamily. Septin GTPase family. In terms of assembly, septins polymerize into heterooligomeric protein complexes that form filaments, and can associate with cellular membranes, actin filaments and microtubules. GTPase activity is required for filament formation. Interacts with SEPTIN6 and SEPTIN11. Self-associates. Component of a septin core octameric complex consisting of SEPTIN12, SEPTIN7, SEPTIN6 and SEPTIN2 or SEPTIN4 in the order 12-7-6-2-2-6-7-12 or 12-7-6-4-4-6-7-12 and located in the sperm annulus; the octamer polymerizes into filaments via the SEPTIN12 N- and C-termini; the SEPTIN12:SEPTIN7 association is mediated by the respective GTP-binding domains. Interacts with SPAG4 and LMNB1. Associates with alpha- and beta-tubulins. Widely expressed. Expressed in lymph node.

It localises to the cytoplasm. The protein resides in the cytoskeleton. The protein localises to the spindle. Its subcellular location is the nucleus. It is found in the cell projection. It localises to the cilium. The protein resides in the flagellum. In terms of biological role, filament-forming cytoskeletal GTPase. Involved in spermatogenesis. Involved in the morphogenesis of sperm heads and the elongation of sperm tails probably implicating the association with alpha- and beta-tubulins. Forms a filamentous structure with SEPTIN7, SEPTIN6, SEPTIN2 and probably SEPTIN4 at the sperm annulus which is required for the structural integrity and motility of the sperm tail during postmeiotic differentiation. May play a role in cytokinesis (Potential). The sequence is that of Septin-12 from Homo sapiens (Human).